We begin with the raw amino-acid sequence, 206 residues long: uncharacterized protein (206 aa).

Positions 14–200 constitute a YrdC-like domain; the sequence is QRLINQAVEI…TPVVVREGVG (187 aa).

This sequence belongs to the SUA5 family.

This is an uncharacterized protein from Escherichia coli O6:H1 (strain CFT073 / ATCC 700928 / UPEC).